Reading from the N-terminus, the 367-residue chain is Protein-glutamate methylesterase/protein-glutamine glutaminase 2 (367 aa).

The region spanning 3–120 (SVVVVDDSAF…SLDIVRIEND (118 aa)) is the Response regulatory domain. At Asp-54 the chain carries 4-aspartylphosphate. A disordered region spans residues 132–174 (RMLRTPRPVRPAPTASAPAQTAQVASAAPATAPSRPAMPATRA). Residues 143 to 174 (APTASAPAQTAQVASAAPATAPSRPAMPATRA) show a composition bias toward low complexity. A CheB-type methylesterase domain is found at 175–367 (SRPVRDVVAI…AAAIMNGLYK (193 aa)). Residues Ser-187, His-214, and Asp-310 contribute to the active site.

Belongs to the CheB family. Post-translationally, phosphorylated by CheA. Phosphorylation of the N-terminal regulatory domain activates the methylesterase activity.

It localises to the cytoplasm. The enzyme catalyses [protein]-L-glutamate 5-O-methyl ester + H2O = L-glutamyl-[protein] + methanol + H(+). The catalysed reaction is L-glutaminyl-[protein] + H2O = L-glutamyl-[protein] + NH4(+). Functionally, involved in chemotaxis. Part of a chemotaxis signal transduction system that modulates chemotaxis in response to various stimuli. Catalyzes the demethylation of specific methylglutamate residues introduced into the chemoreceptors (methyl-accepting chemotaxis proteins or MCP) by CheR. Also mediates the irreversible deamidation of specific glutamine residues to glutamic acid. This Nitratidesulfovibrio vulgaris (strain ATCC 29579 / DSM 644 / CCUG 34227 / NCIMB 8303 / VKM B-1760 / Hildenborough) (Desulfovibrio vulgaris) protein is Protein-glutamate methylesterase/protein-glutamine glutaminase 2.